A 266-amino-acid chain; its full sequence is Undecaprenyl-diphosphatase (266 aa).

8 helical membrane-spanning segments follow: residues 4–24 (WVLA…PVSS), 41–61 (GKVF…SVYF), 80–100 (FVAS…LLHD), 105–125 (VLFE…FALL), 139–159 (AGAF…LALI), 182–202 (AAEF…TVDL), 212–232 (DDAG…IITV), and 245–265 (APFA…LAFI).

The protein belongs to the UppP family.

It is found in the cell inner membrane. The catalysed reaction is di-trans,octa-cis-undecaprenyl diphosphate + H2O = di-trans,octa-cis-undecaprenyl phosphate + phosphate + H(+). Catalyzes the dephosphorylation of undecaprenyl diphosphate (UPP). Confers resistance to bacitracin. The polypeptide is Undecaprenyl-diphosphatase (Phenylobacterium zucineum (strain HLK1)).